The chain runs to 358 residues: 2'-5'-oligoadenylate synthase 1A (358 aa).

The interaction with dsRNA stretch occupies residues 14–61; it reads DKFIEVYLLPNTSFRDDVKSAINVLCDFLKERCFRDTVHPVRVSKVVK. ATP is bound at residue S64. Mg(2+) is bound by residues D76, D78, and D149. The interval 201–211 is interaction with dsRNA; it reads QRPTKLKSLIR. 3 residues coordinate ATP: R211, K214, and Q231.

This sequence belongs to the 2-5A synthase family. In terms of assembly, monomer. Homotetramer. Interacts with OAS1D. Requires Mg(2+) as cofactor.

It is found in the cytoplasm. The protein resides in the mitochondrion. It localises to the nucleus. The protein localises to the microsome. Its subcellular location is the endoplasmic reticulum. The catalysed reaction is 3 ATP = 5'-triphosphoadenylyl-(2'-&gt;5')-adenylyl-(2'-&gt;5')-adenosine + 2 diphosphate. With respect to regulation, produced as a latent enzyme which is activated by dsRNA generated during the course of viral infection. The dsRNA activator must be at least 15 nucleotides long, and no modification of the 2'-hydroxyl group is tolerated. ssRNA or dsDNA do not act as activators. Interferon-induced, dsRNA-activated antiviral enzyme which plays a critical role in cellular innate antiviral response. In addition, it may also play a role in other cellular processes such as apoptosis, cell growth, differentiation and gene regulation. Synthesizes higher oligomers of 2'-5'-oligoadenylates (2-5A) from ATP which then bind to the inactive monomeric form of ribonuclease L (RNase L) leading to its dimerization and subsequent activation. Activation of RNase L leads to degradation of cellular as well as viral RNA, resulting in the inhibition of protein synthesis, thus terminating viral replication. Can mediate the antiviral effect via the classical RNase L-dependent pathway or an alternative antiviral pathway independent of RNase L. The polypeptide is 2'-5'-oligoadenylate synthase 1A (Oas1a) (Rattus norvegicus (Rat)).